The primary structure comprises 357 residues: 3-isopropylmalate dehydrogenase (357 aa).

4 residues coordinate substrate: arginine 97, arginine 107, arginine 135, and aspartate 224. Aspartate 224, aspartate 248, and aspartate 252 together coordinate Mg(2+). 282–294 (GSAPDIAGKNIAN) provides a ligand contact to NAD(+).

Belongs to the isocitrate and isopropylmalate dehydrogenases family. LeuB type 1 subfamily. Homodimer. It depends on Mg(2+) as a cofactor. Requires Mn(2+) as cofactor.

It is found in the cytoplasm. The enzyme catalyses (2R,3S)-3-isopropylmalate + NAD(+) = 4-methyl-2-oxopentanoate + CO2 + NADH. The protein operates within amino-acid biosynthesis; L-leucine biosynthesis; L-leucine from 3-methyl-2-oxobutanoate: step 3/4. Catalyzes the oxidation of 3-carboxy-2-hydroxy-4-methylpentanoate (3-isopropylmalate) to 3-carboxy-4-methyl-2-oxopentanoate. The product decarboxylates to 4-methyl-2 oxopentanoate. This is 3-isopropylmalate dehydrogenase from Prochlorococcus marinus (strain MIT 9312).